Consider the following 100-residue polypeptide: Defensin-B4 (100 aa).

A signal peptide spans 1-22; it reads MRASLLLFILLVYLAHAPQAQG. The propeptide occupies 23–26; that stretch reads VFGP. Intrachain disulfides connect cysteine 29–cysteine 56, cysteine 36–cysteine 50, and cysteine 40–cysteine 57. The tract at residues 60-100 is disordered; that stretch reads STGTSSSQGSHEVPVINSEPALESKPEPQDTQEEEATMVSE. A compositionally biased stretch (acidic residues) spans 89-100; that stretch reads DTQEEEATMVSE.

Belongs to the beta-defensin family. Highly expressed in kidney, lowly expressed in spleen, and expressed at lower levels in lung.

Its subcellular location is the secreted. Its function is as follows. Has antimicrobial activity. The chain is Defensin-B4 from Ornithorhynchus anatinus (Duckbill platypus).